Reading from the N-terminus, the 500-residue chain is L-arabinose isomerase (500 aa).

Residues glutamate 306, glutamate 333, histidine 349, and histidine 448 each coordinate Mn(2+).

The protein belongs to the arabinose isomerase family. The cofactor is Mn(2+).

It carries out the reaction beta-L-arabinopyranose = L-ribulose. It participates in carbohydrate degradation; L-arabinose degradation via L-ribulose; D-xylulose 5-phosphate from L-arabinose (bacterial route): step 1/3. Catalyzes the conversion of L-arabinose to L-ribulose. The chain is L-arabinose isomerase from Shewanella baltica (strain OS223).